We begin with the raw amino-acid sequence, 521 residues long: Colicin-E1* (521 aa).

2 disordered regions span residues 26–52 (NGNP…AAIH) and 127–163 (SGCA…EKEQ). A compositionally biased stretch (gly residues) spans 30–42 (DGSGSGGGGGTGG). Positions 133–145 (KQKKKPVKKRKRA) are enriched in basic residues. Residues 146-163 (EKSFQEAEQRRKEIEKEQ) show a composition bias toward basic and acidic residues. Transmembrane regions (helical) follow at residues 470–486 (AVDA…FSVL) and 493–509 (IWGI…FIDK).

It belongs to the channel forming colicin family.

The protein localises to the cell membrane. This colicin is a channel-forming colicin. This class of transmembrane toxins depolarize the cytoplasmic membrane, leading to dissipation of cellular energy. In terms of biological role, colicins are polypeptide toxins produced by and active against E.coli and closely related bacteria. The sequence is that of Colicin-E1* (cea) from Shigella sonnei.